The primary structure comprises 206 residues: Adenylyl-sulfate kinase (206 aa).

Position 36–43 (36–43) interacts with ATP; it reads GLSGSGKS. Serine 110 acts as the Phosphoserine intermediate in catalysis.

This sequence belongs to the APS kinase family.

It carries out the reaction adenosine 5'-phosphosulfate + ATP = 3'-phosphoadenylyl sulfate + ADP + H(+). It functions in the pathway sulfur metabolism; hydrogen sulfide biosynthesis; sulfite from sulfate: step 2/3. In terms of biological role, catalyzes the synthesis of activated sulfate. The chain is Adenylyl-sulfate kinase (cysC) from Buchnera aphidicola subsp. Acyrthosiphon pisum (strain APS) (Acyrthosiphon pisum symbiotic bacterium).